The following is a 124-amino-acid chain: Large ribosomal subunit protein eL31 (124 aa).

Residue tyrosine 102 is modified to Phosphotyrosine.

This sequence belongs to the eukaryotic ribosomal protein eL31 family.

This Drosophila melanogaster (Fruit fly) protein is Large ribosomal subunit protein eL31 (RpL31).